Here is an 88-residue protein sequence, read N- to C-terminus: UPF0297 protein LACR_0137 (88 aa).

This sequence belongs to the UPF0297 family.

This chain is UPF0297 protein LACR_0137, found in Lactococcus lactis subsp. cremoris (strain SK11).